We begin with the raw amino-acid sequence, 325 residues long: Probable cell division protein WhiA (325 aa).

Positions 273-306 form a DNA-binding region, H-T-H motif; the sequence is SLEELGALADPPLTKDAVAGRIRRLLALADKRAN.

This sequence belongs to the WhiA family.

Functionally, involved in cell division and chromosome segregation. The chain is Probable cell division protein WhiA from Frankia casuarinae (strain DSM 45818 / CECT 9043 / HFP020203 / CcI3).